The following is a 287-amino-acid chain: Polyamine aminopropyltransferase (287 aa).

The PABS domain maps to glutamate 5–asparagine 238. Glutamine 33 is an S-methyl-5'-thioadenosine binding site. 2 residues coordinate spermidine: histidine 64 and aspartate 88. S-methyl-5'-thioadenosine is bound by residues glutamate 108 and aspartate 140–glycine 141. The active-site Proton acceptor is aspartate 158. Position 158-161 (aspartate 158–aspartate 161) interacts with spermidine. Proline 165 is an S-methyl-5'-thioadenosine binding site.

Belongs to the spermidine/spermine synthase family. As to quaternary structure, homodimer or homotetramer.

It is found in the cytoplasm. The catalysed reaction is S-adenosyl 3-(methylsulfanyl)propylamine + putrescine = S-methyl-5'-thioadenosine + spermidine + H(+). The protein operates within amine and polyamine biosynthesis; spermidine biosynthesis; spermidine from putrescine: step 1/1. In terms of biological role, catalyzes the irreversible transfer of a propylamine group from the amino donor S-adenosylmethioninamine (decarboxy-AdoMet) to putrescine (1,4-diaminobutane) to yield spermidine. The protein is Polyamine aminopropyltransferase of Pectobacterium atrosepticum (strain SCRI 1043 / ATCC BAA-672) (Erwinia carotovora subsp. atroseptica).